Consider the following 87-residue polypeptide: Defensin alpha-like protein 1 (87 aa).

The N-terminal stretch at 1–19 (MKTLILLSALVLLALQVQA) is a signal peptide. The propeptide occupies 20 to 56 (DPIQEAEEETKTEEQPADEDQDVSVSFEGPEASAVQD). A compositionally biased stretch (acidic residues) spans 23 to 41 (QEAEEETKTEEQPADEDQD). The interval 23–43 (QEAEEETKTEEQPADEDQDVS) is disordered.

This sequence belongs to the alpha-defensin family. Antiparallel homodimer; disulfide-linked. As to expression, specifically expressed in small intestine (jejunum and ileum). Probably expressed by Paneth cells at the base of intestinal crypts. Coexpressed with MMP7 in small intestine.

It localises to the secreted. Intestinal defense peptide. Has potent antibacterial activity against Gram-negative bacteria E.coli O157:H7, S.typhimurium DT104, and K.pneumoniae; and against Gram-positive bacteria S.aureus, methicillin-resistant S.aureus and L.monocytogenes. Remains active in the presence of NaCl and Mg(2+). Probably functions by disrupting bacterial membrane integrity. However, does not show cytotoxic activity towards human intestinal cells. The chain is Defensin alpha-like protein 1 from Rattus norvegicus (Rat).